Here is a 260-residue protein sequence, read N- to C-terminus: MQKDYQKLIVYLCDFLEKEVQKRGFKKVVYGLSGGLDSAVVGVLCQKVFKENAHALLMPSSVSMPENKTDALNLCEKFSIPYTEYSIAPYDAIFSSHFKDASLTRKGNFCARLRMAFLYDYSLKSDSLVIGTSNKSERMLGYGTLFGDLACAINPIGELFKTEVYELARRLNIPKKILNKPPSADLFVGQSDEKDLGYPYSVIDPLLKDIEALFQTKPIDTETLAQLGYDEILVKNITSRIQKNAFKLELPAIAKRFNPE.

31 to 38 (GLSGGLDS) contacts ATP. Asp-37 serves as a coordination point for Mg(2+). Arg-112 provides a ligand contact to deamido-NAD(+). Thr-132 is a binding site for ATP. Glu-137 lines the Mg(2+) pocket. Residues Lys-161 and Ser-183 each coordinate ATP.

Belongs to the NAD synthetase family. In terms of assembly, homodimer.

It carries out the reaction deamido-NAD(+) + NH4(+) + ATP = AMP + diphosphate + NAD(+) + H(+). It functions in the pathway cofactor biosynthesis; NAD(+) biosynthesis; NAD(+) from deamido-NAD(+) (ammonia route): step 1/1. Functionally, catalyzes the ATP-dependent amidation of deamido-NAD to form NAD. Uses ammonia as a nitrogen source. The protein is NH(3)-dependent NAD(+) synthetase of Helicobacter pylori (strain ATCC 700392 / 26695) (Campylobacter pylori).